The chain runs to 1021 residues: Contactin-1 (1021 aa).

The signal sequence occupies residues 1–20 (MKTPLLVSHLLLISLTSCLG). Ig-like C2-type domains are found at residues 41–131 (PIFE…ATLS), 137–223 (PFPP…KSVF), 241–326 (PADI…ARIY), 331–407 (PEWV…AELK), 413–500 (PTFE…GTLV), and 504–603 (PTRI…LVVR). Disulfide bonds link Cys65/Cys114 and Cys158/Cys211. N-linked (GlcNAc...) asparagine glycans are attached at residues Asn208 and Asn258. A disulfide bridge links Cys263 with Cys310. Asn338 carries an N-linked (GlcNAc...) asparagine glycan. Cystine bridges form between Cys352–Cys391 and Cys436–Cys484. 4 N-linked (GlcNAc...) asparagine glycosylation sites follow: Asn457, Asn473, Asn494, and Asn521. A disulfide bond links Cys526 and Cys585. N-linked (GlcNAc...) asparagine glycosylation is present at Asn593. 4 Fibronectin type-III domains span residues 608–706 (PPGG…TDGA), 711–808 (APSD…SAQD), 813–908 (APTE…APPS), and 909–1002 (QPPR…TLSS). Residues 695 to 719 (SIPSNRIKTDGAAPNVAPSDVGGGG) are disordered. An N-linked (GlcNAc...) asparagine glycan is attached at Asn935. Ser1001 carries GPI-anchor amidated serine lipidation. Positions 1002–1021 (SGLLSLLLPSLGFLVFYSEF) are cleaved as a propeptide — removed in mature form.

This sequence belongs to the immunoglobulin superfamily. Contactin family. In terms of assembly, monomer. Interacts with NOTCH1. Interacts with CNTNAP1 in cis form and TNR. Binds to the carbonic-anhydrase like domain of PTPRZ1. Detected in a complex with NRCAM and PTPRB. Interacts with TASOR. As to expression, expressed by neurons, oligodendrocytes and their progenitors (at protein level). Myelination regulates the expression being down-regulated when neurons are in contact with Schwann cells.

It is found in the cell membrane. Its function is as follows. Contactins mediate cell surface interactions during nervous system development. Involved in the formation of paranodal axo-glial junctions in myelinated peripheral nerves and in the signaling between axons and myelinating glial cells via its association with CNTNAP1. Participates in oligodendrocytes generation by acting as a ligand of NOTCH1. Its association with NOTCH1 promotes NOTCH1 activation through the released notch intracellular domain (NICD) and subsequent translocation to the nucleus. Interaction with TNR induces a repulsion of neurons and an inhibition of neurite outgrowth. This Rattus norvegicus (Rat) protein is Contactin-1 (Cntn1).